A 206-amino-acid polypeptide reads, in one-letter code: Ribosomal RNA small subunit methyltransferase G (206 aa).

S-adenosyl-L-methionine contacts are provided by residues G71, F76, 125–126 (IE), and R139.

This sequence belongs to the methyltransferase superfamily. RNA methyltransferase RsmG family.

It is found in the cytoplasm. It carries out the reaction guanosine(527) in 16S rRNA + S-adenosyl-L-methionine = N(7)-methylguanosine(527) in 16S rRNA + S-adenosyl-L-homocysteine. Its function is as follows. Specifically methylates the N7 position of guanine in position 527 of 16S rRNA. This Cereibacter sphaeroides (strain ATCC 17023 / DSM 158 / JCM 6121 / CCUG 31486 / LMG 2827 / NBRC 12203 / NCIMB 8253 / ATH 2.4.1.) (Rhodobacter sphaeroides) protein is Ribosomal RNA small subunit methyltransferase G.